A 314-amino-acid chain; its full sequence is Ferrochelatase (314 aa).

The Fe cation site is built by His-188 and Glu-269.

The protein belongs to the ferrochelatase family.

Its subcellular location is the cytoplasm. It catalyses the reaction heme b + 2 H(+) = protoporphyrin IX + Fe(2+). It participates in porphyrin-containing compound metabolism; protoheme biosynthesis; protoheme from protoporphyrin-IX: step 1/1. Catalyzes the ferrous insertion into protoporphyrin IX. This chain is Ferrochelatase, found in Campylobacter fetus subsp. fetus (strain 82-40).